We begin with the raw amino-acid sequence, 380 residues long: Homeobox protein ceh-6 (380 aa).

A compositionally biased stretch (low complexity) spans 1–25 (MLIPSSSSIPSSLSASASDSEPSSL). Disordered stretches follow at residues 1-31 (MLIP…SGIS), 167-190 (SGSV…SEQT), and 265-286 (GSPN…KKRT). In terms of domain architecture, POU-specific spans 187–261 (SEQTCPDDLE…LLFKWLEEAD (75 aa)). A DNA-binding region (homeobox) is located at residues 281–340 (KRKKRTSIEVNVKSRLEFHFQSNQKPNAQEITQVAMELQLEKEVVRVWFCNRRQKEKRIA).

It belongs to the POU transcription factor family. Class-3 subfamily. As to quaternary structure, interacts with egl-27, sox-2 and sem-4. Interacts with wdr-5.1. As to expression, expressed in a series of neurons in the ring ganglia, excretory cell, dividing neuroblasts in the ventral cord and rectal cells.

It localises to the nucleus. Vital for embryonic development and essential for the proper function of the excretory cell. Required for the transdifferentiation of the Y rectal epithelial cell to the PDA motor neuron during larval development. This is Homeobox protein ceh-6 from Caenorhabditis elegans.